A 260-amino-acid polypeptide reads, in one-letter code: MFGSNRGGVRGGQDQFNWEDVKTDKQRENYLGNSLMAPVGRWQKGRDLTWYAKDRAPCTGPSREEELAAVREAEREALLAALGYKNVRKQPTGLSKEDFVEICKREGGDPEEKGVDRLLGLGSASGSAGRVALSREDKEAAKLGLSVFTHHRVDSEGPSTAPTAPRKKPRAEDKVEPDAESHKKSKKEKKKKKKKHKKHKKKKDKEHKREADSCSSSPSPPRPRHQRHSDFSPCSKRKREHSQDSGRNPSRRRQDRSSDD.

The span at Met-1–Gly-11 shows a compositional bias: gly residues. The tract at residues Met-1 to Val-21 is disordered. Residues Lys-22, Lys-104, and Lys-113 each participate in a glycyl lysine isopeptide (Lys-Gly) (interchain with G-Cter in SUMO2) cross-link. The span at Glu-106–Asp-116 shows a compositional bias: basic and acidic residues. Disordered regions lie at residues Glu-106–Leu-133 and Ser-146–Asp-260. Residues Arg-117–Ala-132 are compositionally biased toward low complexity. A phosphoserine mark is found at Ser-123 and Ser-127. Positions Arg-170–His-182 are enriched in basic and acidic residues. Positions Lys-183–Glu-206 are enriched in basic residues. Ser-215, Ser-216, and Ser-219 each carry phosphoserine.

The polypeptide is Multiple myeloma tumor-associated protein 2 homolog (Mmtag2) (Mus musculus (Mouse)).